A 71-amino-acid chain; its full sequence is MRKAFYTWLMAQRHSTSNKPAALLADLVFEDTTFPKHTDDFETISRYLEEEASFAFNLGQFDQIWEDYLSH.

Belongs to the UPF0346 family.

This is UPF0346 protein Sez_1447 from Streptococcus equi subsp. zooepidemicus (strain MGCS10565).